A 428-amino-acid polypeptide reads, in one-letter code: Serine--tRNA ligase (428 aa).

233 to 235 is an L-serine binding site; that stretch reads TAE. 264-266 lines the ATP pocket; that stretch reads RRE. E287 lines the L-serine pocket. ATP is bound at residue 351-354; sequence EVSS. S387 contacts L-serine.

This sequence belongs to the class-II aminoacyl-tRNA synthetase family. Type-1 seryl-tRNA synthetase subfamily. As to quaternary structure, homodimer. The tRNA molecule binds across the dimer.

It is found in the cytoplasm. The enzyme catalyses tRNA(Ser) + L-serine + ATP = L-seryl-tRNA(Ser) + AMP + diphosphate + H(+). The catalysed reaction is tRNA(Sec) + L-serine + ATP = L-seryl-tRNA(Sec) + AMP + diphosphate + H(+). The protein operates within aminoacyl-tRNA biosynthesis; selenocysteinyl-tRNA(Sec) biosynthesis; L-seryl-tRNA(Sec) from L-serine and tRNA(Sec): step 1/1. In terms of biological role, catalyzes the attachment of serine to tRNA(Ser). Is also able to aminoacylate tRNA(Sec) with serine, to form the misacylated tRNA L-seryl-tRNA(Sec), which will be further converted into selenocysteinyl-tRNA(Sec). In Salinibacter ruber (strain DSM 13855 / M31), this protein is Serine--tRNA ligase.